A 115-amino-acid polypeptide reads, in one-letter code: T cell receptor beta variable 12-5 (115 aa).

The signal sequence occupies residues 1–21 (MATRLLCCVVLCLLGEELIDA). An Ig-like domain is found at 22-115 (RVTQTPRHKV…SAVYFCASGL (94 aa)). A disulfide bridge links Cys-42 with Cys-111.

In terms of assembly, alpha-beta TR is a heterodimer composed of an alpha and beta chain; disulfide-linked. The alpha-beta TR is associated with the transmembrane signaling CD3 coreceptor proteins to form the TR-CD3 (TcR or TCR). The assembly of alpha-beta TR heterodimers with CD3 occurs in the endoplasmic reticulum where a single alpha-beta TR heterodimer associates with one CD3D-CD3E heterodimer, one CD3G-CD3E heterodimer and one CD247 homodimer forming a stable octameric structure. CD3D-CD3E and CD3G-CD3E heterodimers preferentially associate with TR alpha and TR beta chains, respectively. The association of the CD247 homodimer is the last step of TcR assembly in the endoplasmic reticulum and is required for transport to the cell surface.

Its subcellular location is the cell membrane. V region of the variable domain of T cell receptor (TR) beta chain that participates in the antigen recognition. Alpha-beta T cell receptors are antigen specific receptors which are essential to the immune response and are present on the cell surface of T lymphocytes. Recognize peptide-major histocompatibility (MH) (pMH) complexes that are displayed by antigen presenting cells (APC), a prerequisite for efficient T cell adaptive immunity against pathogens. Binding of alpha-beta TR to pMH complex initiates TR-CD3 clustering on the cell surface and intracellular activation of LCK that phosphorylates the ITAM motifs of CD3G, CD3D, CD3E and CD247 enabling the recruitment of ZAP70. In turn ZAP70 phosphorylates LAT, which recruits numerous signaling molecules to form the LAT signalosome. The LAT signalosome propagates signal branching to three major signaling pathways, the calcium, the mitogen-activated protein kinase (MAPK) kinase and the nuclear factor NF-kappa-B (NF-kB) pathways, leading to the mobilization of transcription factors that are critical for gene expression and essential for T cell growth and differentiation. The T cell repertoire is generated in the thymus, by V-(D)-J rearrangement. This repertoire is then shaped by intrathymic selection events to generate a peripheral T cell pool of self-MH restricted, non-autoaggressive T cells. Post-thymic interaction of alpha-beta TR with the pMH complexes shapes TR structural and functional avidity. The chain is T cell receptor beta variable 12-5 from Homo sapiens (Human).